The following is a 372-amino-acid chain: Tribbles homolog 1 (372 aa).

Disordered stretches follow at residues M1 to A26 and R49 to S85. Residues Y59–S74 show a composition bias toward pro residues. Residues I91–F338 form the Protein kinase domain. The COP1-binding signature appears at D355–E360.

It belongs to the protein kinase superfamily. CAMK Ser/Thr protein kinase family. Tribbles subfamily. As to quaternary structure, monomer. Interacts (via protein kinase domain) with CEBPA. Interacts with COP1.

Its function is as follows. Adapter protein involved in protein degradation by interacting with COP1 ubiquitin ligase. Promotes CEBPA degradation and inhibits its function. Controls macrophage, eosinophil and neutrophil differentiation via the COP1-binding domain. Regulates myeloid cell differentiation by altering the expression of CEBPA in a COP1-dependent manner. Interacts with MAPK kinases and regulates activation of MAP kinases, but has no kinase activity. This chain is Tribbles homolog 1, found in Mus musculus (Mouse).